A 412-amino-acid chain; its full sequence is Alanyl-tRNA editing protein Aarsd1 (412 aa).

Zn(2+)-binding residues include H108, H112, C208, and H212.

This sequence belongs to the class-II aminoacyl-tRNA synthetase family. Alax-L subfamily. Zn(2+) is required as a cofactor.

Its subcellular location is the cytoplasm. Its function is as follows. Functions in trans to edit the amino acid moiety from incorrectly charged tRNA(Ala). The sequence is that of Alanyl-tRNA editing protein Aarsd1 (aarsd1) from Danio rerio (Zebrafish).